A 211-amino-acid chain; its full sequence is ATP-dependent dethiobiotin synthetase BioD 2 (211 aa).

ATP is bound at residue 13-18 (DIGKTI). Residue Thr17 participates in Mg(2+) binding. Lys38 is a catalytic residue. Thr42 contacts substrate. Residues Asp50, 115 to 118 (EGAG), and 175 to 176 (NT) contribute to the ATP site. Mg(2+) contacts are provided by Asp50 and Glu115.

It belongs to the dethiobiotin synthetase family. As to quaternary structure, homodimer. Mg(2+) serves as cofactor.

The protein resides in the cytoplasm. It carries out the reaction (7R,8S)-7,8-diammoniononanoate + CO2 + ATP = (4R,5S)-dethiobiotin + ADP + phosphate + 3 H(+). The protein operates within cofactor biosynthesis; biotin biosynthesis; biotin from 7,8-diaminononanoate: step 1/2. Catalyzes a mechanistically unusual reaction, the ATP-dependent insertion of CO2 between the N7 and N8 nitrogen atoms of 7,8-diaminopelargonic acid (DAPA, also called 7,8-diammoniononanoate) to form a ureido ring. The polypeptide is ATP-dependent dethiobiotin synthetase BioD 2 (Haemophilus ducreyi (strain 35000HP / ATCC 700724)).